Reading from the N-terminus, the 974-residue chain is Probable proton ATPase 1A (974 aa).

Over residues 1–23 the composition is skewed to basic and acidic residues; sequence MSSKKYELDAAAFEDKPESHSDA. The segment at 1-61 is disordered; the sequence is MSSKKYELDA…ATDLLPPSKG (61 aa). Topologically, residues 1 to 92 are cytoplasmic; sequence MSSKKYELDA…KTPSWLIYVR (92 aa). A helical membrane pass occupies residues 93 to 112; that stretch reads GLWGPMPAALWIAIIIEFAL. Topologically, residues 113–117 are extracellular; that stretch reads ENWPD. The helical transmembrane segment at 118 to 137 threads the bilayer; sequence GAILFAIQIANATIGWYETI. Over 138–264 the chain is Cytoplasmic; it reads KAGDAVAALK…LGNIHVILRR (127 aa). A helical membrane pass occupies residues 265–286; the sequence is VMFSLCAISFMLCMCCFIYLLA. Topologically, residues 287-294 are extracellular; the sequence is RFYETFRH. A helical transmembrane segment spans residues 295-321; the sequence is ALQFAVVVLVVSIPIALEIVVTTTLAV. Over 322 to 630 the chain is Cytoplasmic; sequence GSKHLSKHKI…AVHGATDAAR (309 aa). Aspartate 351 (4-aspartylphosphate intermediate) is an active-site residue. Residues aspartate 605 and aspartate 609 each contribute to the Mg(2+) site. The chain crosses the membrane as a helical span at residues 631–651; that stretch reads AAADMVLTEPGLSVVVEAMLV. Residues 652–661 are Extracellular-facing; that stretch reads SREVFQRMLS. A helical transmembrane segment spans residues 662-684; the sequence is FLTYRISATLQLVCFFFIACFSL. Residues 685 to 697 lie on the Cytoplasmic side of the membrane; that stretch reads TPKAYGSVDPHFQ. The helical transmembrane segment at 698–712 threads the bilayer; the sequence is FFHLPVLMFMLITLL. The Extracellular segment spans residues 713–737; sequence NDGCLMTIGYDHVIPSERPQKWNLP. Aspartate 714 is a Mg(2+) binding site. A helical transmembrane segment spans residues 738 to 761; the sequence is VVFVSASILAAVACGSSLMLLWIG. The Cytoplasmic segment spans residues 762 to 812; sequence LEGYSSQYYENSWFHRLGLAQLPQGKLVTMMYLKISISDFLTLFSSRTGGH. The helical transmembrane segment at 813–840 threads the bilayer; it reads FFFYMPPSPILFCGAIISLLVSTMAASF. Over 841-868 the chain is Extracellular; it reads WHKSRPDNVLTEGLAWGQTNAEKLLPLW. The helical transmembrane segment at 869 to 887 threads the bilayer; sequence VWIYCIVWWFVQDVVKVLA. The Cytoplasmic portion of the chain corresponds to 888 to 974; sequence HICMDAVDLF…VNVYVSRDQK (87 aa). Over residues 950 to 959 the composition is skewed to basic and acidic residues; that stretch reads GLREDTHSPI. The interval 950-974 is disordered; it reads GLREDTHSPIEEASPVNVYVSRDQK.

Belongs to the cation transport ATPase (P-type) (TC 3.A.3) family. Type IIIA subfamily.

It is found in the membrane. The enzyme catalyses ATP + H2O + H(+)(in) = ADP + phosphate + 2 H(+)(out). This Leishmania donovani protein is Probable proton ATPase 1A (H1A).